Consider the following 339-residue polypeptide: Anthranilate phosphoribosyltransferase (339 aa).

Residues glycine 79, glycine 82–aspartate 83, serine 87, asparagine 89–threonine 92, lysine 107–serine 115, and serine 119 each bind 5-phospho-alpha-D-ribose 1-diphosphate. Glycine 79 contributes to the anthranilate binding site. Residue serine 91 participates in Mg(2+) binding. Residue asparagine 110 coordinates anthranilate. Anthranilate is bound at residue arginine 165. Mg(2+)-binding residues include aspartate 224 and glutamate 225.

The protein belongs to the anthranilate phosphoribosyltransferase family. In terms of assembly, homodimer. Mg(2+) is required as a cofactor.

It catalyses the reaction N-(5-phospho-beta-D-ribosyl)anthranilate + diphosphate = 5-phospho-alpha-D-ribose 1-diphosphate + anthranilate. It functions in the pathway amino-acid biosynthesis; L-tryptophan biosynthesis; L-tryptophan from chorismate: step 2/5. Functionally, catalyzes the transfer of the phosphoribosyl group of 5-phosphorylribose-1-pyrophosphate (PRPP) to anthranilate to yield N-(5'-phosphoribosyl)-anthranilate (PRA). This is Anthranilate phosphoribosyltransferase from Listeria monocytogenes serovar 1/2a (strain ATCC BAA-679 / EGD-e).